We begin with the raw amino-acid sequence, 513 residues long: Glucose-6-phosphate 1-dehydrogenase 2 (513 aa).

An N-acetylalanine modification is found at Ala-2. Phosphoserine is present on Ser-8. At Thr-10 the chain carries Phosphothreonine. Residues 38 to 45 (GASGDLAK) and Arg-72 contribute to the NADP(+) site. The residue at position 89 (Lys-89) is an N6-acetyllysine. NADP(+)-binding residues include Tyr-147 and Lys-171. Residues Lys-171, 201-205 (HYLDK), Glu-239, and Asp-258 each bind D-glucose 6-phosphate. Residue Lys-171 is modified to N6-(2-hydroxyisobutyryl)lysine; alternate. Position 171 is an N6-acetyllysine; alternate (Lys-171). His-263 (proton acceptor) is an active-site residue. An NADP(+)-binding site is contributed by Arg-357. Residues Lys-360 and Arg-365 each coordinate D-glucose 6-phosphate. NADP(+) is bound by residues Lys-366, Arg-370, and Arg-393. Gln-395 contacts D-glucose 6-phosphate. Residue 421-423 (DLT) coordinates NADP(+). Lys-432 bears the N6-acetyllysine mark. NADP(+) contacts are provided by Arg-487 and Tyr-503. Position 503 is a phosphotyrosine (Tyr-503).

It belongs to the glucose-6-phosphate dehydrogenase family. As to quaternary structure, homotetramer; dimer of dimers. Interacts with SIRT2; the interaction is enhanced by H(2)O(2) treatment. In terms of processing, acetylated by ELP3; acetylation inhibits its homodimerization and enzyme activity. Deacetylated by SIRT2; deacetylation stimulates its enzyme activity. In terms of tissue distribution, testis.

The protein localises to the cytoplasm. It localises to the cytosol. Its subcellular location is the membrane. The catalysed reaction is D-glucose 6-phosphate + NADP(+) = 6-phospho-D-glucono-1,5-lactone + NADPH + H(+). The protein operates within carbohydrate degradation; pentose phosphate pathway; D-ribulose 5-phosphate from D-glucose 6-phosphate (oxidative stage): step 1/3. In terms of biological role, catalyzes the rate-limiting step of the oxidative pentose-phosphate pathway, which represents a route for the dissimilation of carbohydrates besides glycolysis. The main function of this enzyme is to provide reducing power (NADPH) and pentose phosphates for fatty acid and nucleic acid synthesis. In Mus musculus (Mouse), this protein is Glucose-6-phosphate 1-dehydrogenase 2 (G6pd2).